We begin with the raw amino-acid sequence, 177 residues long: Nucleoside triphosphate/diphosphate phosphatase (177 aa).

Catalysis depends on Arg23, which acts as the Proton donor. Residues Asn87, Asp103, Asp105, Asp107, Asp120, and Glu123 each contribute to the Mg(2+) site.

This sequence belongs to the Ntdp family. Mg(2+) serves as cofactor.

The enzyme catalyses a ribonucleoside 5'-triphosphate + H2O = a ribonucleoside 5'-diphosphate + phosphate + H(+). It carries out the reaction a ribonucleoside 5'-diphosphate + H2O = a ribonucleoside 5'-phosphate + phosphate + H(+). Functionally, has nucleoside phosphatase activity towards nucleoside triphosphates and nucleoside diphosphates. In Streptococcus pneumoniae serotype 2 (strain D39 / NCTC 7466), this protein is Nucleoside triphosphate/diphosphate phosphatase.